Consider the following 284-residue polypeptide: Orotidine 5'-phosphate decarboxylase (284 aa).

The active-site Proton donor is the Lys-95.

It belongs to the OMP decarboxylase family. Type 2 subfamily.

It catalyses the reaction orotidine 5'-phosphate + H(+) = UMP + CO2. It functions in the pathway pyrimidine metabolism; UMP biosynthesis via de novo pathway; UMP from orotate: step 2/2. The chain is Orotidine 5'-phosphate decarboxylase from Leptothrix cholodnii (strain ATCC 51168 / LMG 8142 / SP-6) (Leptothrix discophora (strain SP-6)).